The chain runs to 203 residues: Histidine biosynthesis bifunctional protein HisIE (203 aa).

The interval 1 to 114 (MLTEQQRREL…FGDTAHQWLF (114 aa)) is phosphoribosyl-AMP cyclohydrolase. The interval 115-203 (LYQLEQLLAE…VIENLRKRHQ (89 aa)) is phosphoribosyl-ATP pyrophosphohydrolase.

In the N-terminal section; belongs to the PRA-CH family. It in the C-terminal section; belongs to the PRA-PH family.

It localises to the cytoplasm. It catalyses the reaction 1-(5-phospho-beta-D-ribosyl)-ATP + H2O = 1-(5-phospho-beta-D-ribosyl)-5'-AMP + diphosphate + H(+). The enzyme catalyses 1-(5-phospho-beta-D-ribosyl)-5'-AMP + H2O = 1-(5-phospho-beta-D-ribosyl)-5-[(5-phospho-beta-D-ribosylamino)methylideneamino]imidazole-4-carboxamide. It participates in amino-acid biosynthesis; L-histidine biosynthesis; L-histidine from 5-phospho-alpha-D-ribose 1-diphosphate: step 2/9. Its pathway is amino-acid biosynthesis; L-histidine biosynthesis; L-histidine from 5-phospho-alpha-D-ribose 1-diphosphate: step 3/9. The sequence is that of Histidine biosynthesis bifunctional protein HisIE (hisI) from Escherichia coli (strain K12).